A 253-amino-acid polypeptide reads, in one-letter code: Small ribosomal subunit protein uS2 (253 aa).

N-acetylserine is present on Ser-2. The interval 212-253 (QQAAEEAAAGEEDDEAKEEVAAEEQTEAADWAEGQSEEVASW) is disordered. Residues 219–238 (AAGEEDDEAKEEVAAEEQTE) are compositionally biased toward acidic residues.

It belongs to the universal ribosomal protein uS2 family. Component of the small ribosomal subunit. Mature ribosomes consist of a small (40S) and a large (60S) subunit. The 40S subunit contains about 33 different proteins and 1 molecule of RNA (18S). The 60S subunit contains about 49 different proteins and 3 molecules of RNA (25S, 5.8S and 5S). Interacts with RPS21.

The protein resides in the cytoplasm. Functionally, required for the assembly and/or stability of the 40S ribosomal subunit. Required for the processing of the 20S rRNA-precursor to mature 18S rRNA in a late step of the maturation of 40S ribosomal subunits. This Eremothecium gossypii (strain ATCC 10895 / CBS 109.51 / FGSC 9923 / NRRL Y-1056) (Yeast) protein is Small ribosomal subunit protein uS2.